The following is a 174-amino-acid chain: UPF0340 protein SE_1711 (174 aa).

The protein belongs to the UPF0340 family.

This is UPF0340 protein SE_1711 from Staphylococcus epidermidis (strain ATCC 12228 / FDA PCI 1200).